The primary structure comprises 122 residues: Large ribosomal subunit protein uL14 (122 aa).

The protein belongs to the universal ribosomal protein uL14 family. In terms of assembly, part of the 50S ribosomal subunit. Forms a cluster with proteins L3 and L19. In the 70S ribosome, L14 and L19 interact and together make contacts with the 16S rRNA in bridges B5 and B8.

Functionally, binds to 23S rRNA. Forms part of two intersubunit bridges in the 70S ribosome. This chain is Large ribosomal subunit protein uL14, found in Orientia tsutsugamushi (strain Boryong) (Rickettsia tsutsugamushi).